Here is a 704-residue protein sequence, read N- to C-terminus: Acetyl-coenzyme A synthetase 1 (704 aa).

CoA-binding positions include 239 to 242 (RGGK) and Thr358. ATP-binding positions include 434–436 (GEP), 458–463 (DTYWQT), Asp550, and Arg565. Ser573 is a binding site for CoA. Arg576 provides a ligand contact to ATP. CoA is bound at residue Arg641. Residues 702 to 704 (VKL) carry the Microbody targeting signal motif.

It belongs to the ATP-dependent AMP-binding enzyme family.

Its subcellular location is the microsome. The protein localises to the endoplasmic reticulum. The catalysed reaction is acetate + ATP + CoA = acetyl-CoA + AMP + diphosphate. This is Acetyl-coenzyme A synthetase 1 (ACS1) from Candida glabrata (strain ATCC 2001 / BCRC 20586 / JCM 3761 / NBRC 0622 / NRRL Y-65 / CBS 138) (Yeast).